The chain runs to 442 residues: MAKTLISSPSFLGTPLPSLHRTFSPNRTRLFTKVQFSFHQLPPIQSVSHSVDLSGIFARAEGLLYTLADATVAADAAASTDVAAQKNGGWFGFISDGMEFVLKVLKDGLSSVHVPYSYGFAIILLTVIVKAATLPLTKQQVESTLAMQNLQPKIKAIQERYAGNQERIQLETSRLYTQAGVNPLAGCLPTLATIPVWIGLYQALSNVANEGLLTEGFLWIPSLGGPTSIAARQSGSGISWLFPFVDGHPLLGWYDTAAYLVLPVLLIVSQYVSMEIMKPPQTNDPNQKNTLLIFKFLPLMIGYFSLSVPSGLTIYWFTNNVLSTAQQVWLRKLGGAKPAVNENAGGIITAGQAKRSASKPEKGGERFRQLKEEEKKKKLIKALPVEEVQPLASASASNDGSDVENNKEQEVTEESNTSKVSQEVQSFSRERRSKRSKRKPVA.

At 1 to 108 (MAKTLISSPS…EFVLKVLKDG (108 aa)) the chain is on the lumenal side. Residues 109-129 (LSSVHVPYSYGFAIILLTVIV) traverse the membrane as a helical segment. Residues 130 to 183 (KAATLPLTKQQVESTLAMQNLQPKIKAIQERYAGNQERIQLETSRLYTQAGVNP) lie on the Stromal side of the membrane. Residues 184–204 (LAGCLPTLATIPVWIGLYQAL) traverse the membrane as a helical segment. Residues 205-296 (SNVANEGLLT…QKNTLLIFKF (92 aa)) are Lumenal-facing. The helical transmembrane segment at 297-317 (LPLMIGYFSLSVPSGLTIYWF) threads the bilayer. The Stromal portion of the chain corresponds to 318–442 (TNNVLSTAQQ…SKRSKRKPVA (125 aa)). Disordered regions lie at residues 350-371 (AGQA…RQLK) and 390-442 (PLAS…KPVA). Residues 358–371 (SKPEKGGERFRQLK) are compositionally biased toward basic and acidic residues. Polar residues predominate over residues 414-427 (ESNTSKVSQEVQSF). The segment covering 431-442 (RRSKRSKRKPVA) has biased composition (basic residues).

This sequence belongs to the OXA1/ALB3/YidC (TC 2.A.9.2) family. In terms of tissue distribution, highly expressed in apical buds. Low levels of expression in leaves. Not expressed in roots, and stems.

Its subcellular location is the plastid. It localises to the chloroplast thylakoid membrane. Functionally, may be required for the insertion of some integral membrane proteins into the chloroplast thylakoid membrane. May play a role in inhibiting senescence. In Pisum sativum (Garden pea), this protein is Inner membrane protein PPF-1, chloroplastic (PPF-1).